Here is a 359-residue protein sequence, read N- to C-terminus: Structure-specific endonuclease subunit SLX1 homolog (359 aa).

The GIY-YIG domain maps to 9–91 (GLFACYCLVA…TYPTRSRYVN (83 aa)). The SLX1-type zinc finger occupies 192 to 238 (CPICQDGVSPSNVQCMQCSARFCITCAGKLFTRRNTLIPCFGKCPIC). Residues 256–359 (VAGRKSVPHK…LPSDVISITD (104 aa)) are disordered. Positions 269–281 (VDGQSSLSQNSSY) are enriched in polar residues. Residues 295 to 306 (EPEKDDISRDES) are compositionally biased toward basic and acidic residues. Over residues 316 to 326 (SSVALSDSSRS) the composition is skewed to low complexity.

The protein belongs to the SLX1 family. Forms a heterodimer with a member of the SLX4 family. A divalent metal cation serves as cofactor.

The protein localises to the nucleus. Catalytic subunit of a heterodimeric structure-specific endonuclease that resolves DNA secondary structures generated during DNA repair and recombination. Has endonuclease activity towards branched DNA substrates, introducing single-strand cuts in duplex DNA close to junctions with ss-DNA. In Giardia intestinalis (strain ATCC 50803 / WB clone C6) (Giardia lamblia), this protein is Structure-specific endonuclease subunit SLX1 homolog.